We begin with the raw amino-acid sequence, 346 residues long: MAVDVKSRAKRYEKLDFLGEGQFATVYKARDKNTNQIVAIKKIKLGHRSEAKDGINRTALREIKLLQELSHPNIIGLLDAFGHKSNISLVFDFMETDLEVIIKDNSLVLTPSHIKAYMLMTLQGLEYLHQHWILHRDLKPNNLLLDENGVLKLADFGLAKSFGSPNRAYTHQVVTRWYRAPELLFGARMYGVGVDMWAVGCILAELLLRVPFLPGDSDLDQLTRIFETLGTPTEEQWPDMCSLPDYVTFKSFPGVPLQHIFIAAGDDLLELIQGLFLFNPCTRTTASQALKTKYFSNRPGPTPGCQLPRPNCPVEALKEPANPTVATKRKRAEALEQGILPKKLIF.

Position 2 is an N-acetylalanine (alanine 2). Phosphoserine is present on serine 7. In terms of domain architecture, Protein kinase spans 12–295 (YEKLDFLGEG…ASQALKTKYF (284 aa)). ATP-binding positions include 18–26 (LGEGQFATV) and lysine 41. The active-site Proton acceptor is aspartate 137. A Phosphoserine; by CDK1 and CDK2 modification is found at serine 164. Threonine 170 carries the phosphothreonine; by CDK2 modification.

It belongs to the protein kinase superfamily. CMGC Ser/Thr protein kinase family. CDC2/CDKX subfamily. Associates primarily with cyclin-H (CCNH) and MAT1 to form the CAK complex. CAK can further associate with the core-TFIIH to form the TFIIH basal transcription factor; this complex is sensitive to UV light. The CAK complex binds to p53/TP53 in response to DNA damage. Interacts with CDK2, SF1/NR5A1, PUF60 and PRKCI. Interacts with HINT1. Post-translationally, phosphorylation of Ser-164 during mitosis inactivates the enzyme. Phosphorylation of Thr-170 is required for activity. Phosphorylated at Ser-164 and Thr-170 by CDK2.

Its subcellular location is the nucleus. It is found in the cytoplasm. The protein resides in the perinuclear region. It carries out the reaction L-seryl-[protein] + ATP = O-phospho-L-seryl-[protein] + ADP + H(+). The enzyme catalyses L-threonyl-[protein] + ATP = O-phospho-L-threonyl-[protein] + ADP + H(+). It catalyses the reaction [DNA-directed RNA polymerase] + ATP = phospho-[DNA-directed RNA polymerase] + ADP + H(+). With respect to regulation, phosphorylation at Thr-170 is required for enzymatic activity. The association of p53/TP53 to the CAK complex in response to DNA damage reduces kinase activity toward CDK2 and RNA polymerase II repetitive C-terminal domain (CTD), thus stopping cell cycle progression. Serine/threonine kinase involved in cell cycle control and in RNA polymerase II-mediated RNA transcription. Cyclin-dependent kinases (CDKs) are activated by the binding to a cyclin and mediate the progression through the cell cycle. Each different complex controls a specific transition between 2 subsequent phases in the cell cycle. Required for both activation and complex formation of CDK1/cyclin-B during G2-M transition, and for activation of CDK2/cyclins during G1-S transition (but not complex formation). CDK7 is the catalytic subunit of the CDK-activating kinase (CAK) complex. Phosphorylates SPT5/SUPT5H, SF1/NR5A1, POLR2A, p53/TP53, CDK1, CDK2, CDK4, CDK6 and CDK11B/CDK11. Initiates transcription by RNA polymerase II by mediating phosphorylation of POLR2A at 'Ser-5' of the repetitive C-terminal domain (CTD) when POLR2A is in complex with DNA, promoting dissociation from DNA and initiation. CAK activates the cyclin-associated kinases CDK1, CDK2, CDK4 and CDK6 by threonine phosphorylation, thus regulating cell cycle progression. CAK complexed to the core-TFIIH basal transcription factor activates RNA polymerase II by serine phosphorylation of the CTD of POLR2A, allowing its escape from the promoter and elongation of the transcripts. Its expression and activity are constant throughout the cell cycle. Upon DNA damage, triggers p53/TP53 activation by phosphorylation, but is inactivated in turn by p53/TP53; this feedback loop may lead to an arrest of the cell cycle and of the transcription, helping in cell recovery, or to apoptosis. Required for DNA-bound peptides-mediated transcription and cellular growth inhibition. This Mus musculus (Mouse) protein is Cyclin-dependent kinase 7 (Cdk7).